The primary structure comprises 98 residues: NADH-ubiquinone oxidoreductase chain 4L (98 aa).

The next 3 helical transmembrane spans lie at 2-22, 26-46, and 61-81; these read TLVMFNITIAFTLSLLGTLMF, LMSTLLCLEGMMLCLFIMAVI, and IIILVFAACEAAVGLALLAMV.

The protein belongs to the complex I subunit 4L family. Core subunit of respiratory chain NADH dehydrogenase (Complex I) which is composed of 45 different subunits.

The protein resides in the mitochondrion inner membrane. The enzyme catalyses a ubiquinone + NADH + 5 H(+)(in) = a ubiquinol + NAD(+) + 4 H(+)(out). Functionally, core subunit of the mitochondrial membrane respiratory chain NADH dehydrogenase (Complex I) which catalyzes electron transfer from NADH through the respiratory chain, using ubiquinone as an electron acceptor. Part of the enzyme membrane arm which is embedded in the lipid bilayer and involved in proton translocation. This Nyctomys sumichrasti (Sumichrast's vesper rat) protein is NADH-ubiquinone oxidoreductase chain 4L (MT-ND4L).